The following is a 267-amino-acid chain: CD82 antigen (267 aa).

Residues Met-1–Tyr-11 are Cytoplasmic-facing. Cys-5 carries the S-palmitoyl cysteine lipid modification. A helical membrane pass occupies residues Phe-12–Val-32. Over Trp-33–Arg-53 the chain is Extracellular. A helical transmembrane segment spans residues Met-54–Leu-72. Residues Gly-73–Cys-83 are Cytoplasmic-facing. Cys-74 carries the S-palmitoyl cysteine lipid modification. The helical transmembrane segment at Leu-84–Met-110 threads the bilayer. At Gly-111–Leu-228 the chain is on the extracellular side. N-linked (GlcNAc...) asparagine glycans are attached at residues Asn-129, Asn-157, and Asn-198. The helical transmembrane segment at Gly-229 to Ile-250 threads the bilayer. Topologically, residues Cys-251–Tyr-267 are cytoplasmic.

Belongs to the tetraspanin (TM4SF) family. In terms of assembly, forms homooligomers. Interacts directly with IGSF8. Interacts with EGFR. Interacts with VEGFA and PDGFB. Interacts with ITGA4. Interacts with ITGA6; this interaction reduces ITGA6 cell surface expression. Interacts with ITGB1. Interacts with TLR4; this interaction inhibits TLR4-mediated signaling pathway. Interacts with TLR9. Interacts with PLAUR. Post-translationally, palmitoylated. Palmitoylation contributes to oligomerization and surface expression. In terms of tissue distribution, lymphoid specific.

The protein localises to the cell membrane. It is found in the cytoplasmic vesicle. It localises to the phagosome. Structural component of specialized membrane microdomains known as tetraspanin-enriched microdomains (TERMs), which act as platforms for receptor clustering and signaling. Participates thereby in diverse biological functions such as cell signal transduction, adhesion, migration and protein trafficking. Acts as a attenuator of EGF signaling, facilitating ligand-induced endocytosis of the receptor and its subsequent desensitization. Mechanistically, modulates ligand-induced ubiquitination and trafficking of EGFR via E3 ligase CBL phosphorylation by PKC. Increases cell-matrix adhesion by regulating the membrane organization of integrin alpha4/ITA4. Modulates adhesion and suppresses cell migration through other integrins such as the alpha6/ITGA6 and beta1/ITGB1. Decreases cell-associated plasminogen activation by interfering with the interaction between urokinase-type plasminogen activator/PLAU and its receptor PLAUR. Associates with CD4 or CD8 and delivers costimulatory signals for the TCR/CD3 pathway. Plays a role in TLR9 trafficking to acidified CpG-containing compartments by controlling interaction between TLR9 and VAMP3 and subsequent myddosome assembly. Inhibits LPS-induced inflammatory response by preventing binding of LPS to TLR4 on the cell surface. Plays a role in the activation of macrophages into anti-inflammatory phenotypes. Independently of Toll-like receptor (TLR) signaling, is recruited to pathogen-containing phagosomes prior to fusion with lysosomes and thereby participates in antigen presentation. Also acts to control angiogenesis and switch angiogenic milieu to quiescent state by binding and sequestering VEGFA and PDGFB to inhibit the signaling they trigger via their respective cell surface receptor. The protein is CD82 antigen (CD82) of Homo sapiens (Human).